Here is an 804-residue protein sequence, read N- to C-terminus: Exocyst complex component 6 (804 aa).

This sequence belongs to the SEC15 family. The exocyst complex is composed of EXOC1, EXOC2, EXOC3, EXOC4, EXOC5, EXOC6, EXOC7 and EXOC8. Interacts with CNTRL. Interacts with RAB11A in a GTP-dependent manner.

The protein resides in the cytoplasm. The protein localises to the perinuclear region. It localises to the cell projection. Its subcellular location is the growth cone. It is found in the midbody. The protein resides in the midbody ring. Component of the exocyst complex involved in the docking of exocytic vesicles with fusion sites on the plasma membrane. Together with RAB11A, RAB3IP, RAB8A, PARD3, PRKCI, ANXA2, CDC42 and DNMBP promotes transcytosis of PODXL to the apical membrane initiation sites (AMIS), apical surface formation and lumenogenesis. This chain is Exocyst complex component 6 (Exoc6), found in Rattus norvegicus (Rat).